Consider the following 199-residue polypeptide: dITP/XTP pyrophosphatase (199 aa).

A substrate-binding site is contributed by 7–12; it reads TTNLHK. Mg(2+)-binding residues include E41 and D70. D70 serves as the catalytic Proton acceptor. Residues S71, 154 to 157, K177, and 182 to 183 contribute to the substrate site; these read FGYD and HR.

The protein belongs to the HAM1 NTPase family. As to quaternary structure, homodimer. Mg(2+) serves as cofactor.

It catalyses the reaction XTP + H2O = XMP + diphosphate + H(+). The enzyme catalyses dITP + H2O = dIMP + diphosphate + H(+). It carries out the reaction ITP + H2O = IMP + diphosphate + H(+). Pyrophosphatase that catalyzes the hydrolysis of nucleoside triphosphates to their monophosphate derivatives, with a high preference for the non-canonical purine nucleotides XTP (xanthosine triphosphate), dITP (deoxyinosine triphosphate) and ITP. Seems to function as a house-cleaning enzyme that removes non-canonical purine nucleotides from the nucleotide pool, thus preventing their incorporation into DNA/RNA and avoiding chromosomal lesions. This Protochlamydia amoebophila (strain UWE25) protein is dITP/XTP pyrophosphatase.